We begin with the raw amino-acid sequence, 327 residues long: Ubiquinone biosynthesis O-methyltransferase, mitochondrial (327 aa).

Residues arginine 79, glycine 142, aspartate 165, and phenylalanine 210 each coordinate S-adenosyl-L-methionine. Positions 211, 214, and 215 each coordinate Mg(2+).

This sequence belongs to the class I-like SAM-binding methyltransferase superfamily. UbiG/COQ3 family. As to quaternary structure, component of a multi-subunit COQ enzyme complex, composed of at least COQ3, COQ4, COQ5, COQ6, COQ7 and COQ9. Mg(2+) is required as a cofactor.

It is found in the mitochondrion inner membrane. The catalysed reaction is a 3,4-dihydroxy-5-(all-trans-polyprenyl)benzoate + S-adenosyl-L-methionine = a 4-hydroxy-3-methoxy-5-(all-trans-polyprenyl)benzoate + S-adenosyl-L-homocysteine + H(+). It carries out the reaction a 3-demethylubiquinone + S-adenosyl-L-methionine = a ubiquinone + S-adenosyl-L-homocysteine. It catalyses the reaction a 3-demethylubiquinol + S-adenosyl-L-methionine = a ubiquinol + S-adenosyl-L-homocysteine + H(+). The protein operates within cofactor biosynthesis; ubiquinone biosynthesis. In terms of biological role, O-methyltransferase required for two non-consecutive steps during ubiquinone biosynthesis. Catalyzes the 2 O-methylation of 3,4-dihydroxy-5-(all-trans-polyprenyl)benzoic acid into 4-hydroxy-3-methoxy-5-(all-trans-polyprenyl)benzoic acid. Also catalyzes the last step of ubiquinone biosynthesis by mediating methylation of 3-demethylubiquinone into ubiquinone. Also able to mediate the methylation of 3-demethylubiquinol into ubiquinol. In Candida albicans (Yeast), this protein is Ubiquinone biosynthesis O-methyltransferase, mitochondrial.